The chain runs to 315 residues: Methionyl-tRNA formyltransferase (315 aa).

S113–P116 serves as a coordination point for (6S)-5,6,7,8-tetrahydrofolate.

The protein belongs to the Fmt family.

The enzyme catalyses L-methionyl-tRNA(fMet) + (6R)-10-formyltetrahydrofolate = N-formyl-L-methionyl-tRNA(fMet) + (6S)-5,6,7,8-tetrahydrofolate + H(+). Its function is as follows. Attaches a formyl group to the free amino group of methionyl-tRNA(fMet). The formyl group appears to play a dual role in the initiator identity of N-formylmethionyl-tRNA by promoting its recognition by IF2 and preventing the misappropriation of this tRNA by the elongation apparatus. The protein is Methionyl-tRNA formyltransferase of Aliivibrio fischeri (strain MJ11) (Vibrio fischeri).